The chain runs to 381 residues: Heterogeneous nuclear rnp K-like protein 2 (381 aa).

The disordered stretch occupies residues 1–34; that stretch reads MSQFFEAATPVAIPTNNTNGGSSDAGSAATGGAP. Residues 15 to 33 are compositionally biased toward low complexity; sequence TNNTNGGSSDAGSAATGGA. KH domains follow at residues 43-107, 156-221, and 258-326; these read TINH…IGDI, IGYV…LIEI, and NTRI…ESML. A disordered region spans residues 344-381; the sequence is LEAAEGDATVVTERSDSASFLEEKEEPQENHDNKEEQS. 3 positions are modified to phosphoserine: Ser-358, Ser-360, and Ser-362. Over residues 370–381 the composition is skewed to basic and acidic residues; that stretch reads PQENHDNKEEQS.

It belongs to the HEK2 family. In terms of assembly, binds RNA. Post-translationally, phosphorylated by the plasma membrane-Anchored casein kinase YCK1. Phosphorylation at its C-terminus reduces its RNA-binding capacity.

The protein localises to the cytoplasm. The protein resides in the P-body. It is found in the nucleus. Its subcellular location is the chromosome. It localises to the telomere. In terms of biological role, RNA-binding protein involved in the correct localization of transcripts in the cell. RNA localization is a widespread mechanism for achieving localized protein synthesis. Required for the asymmetric localization to the daughter cell nucleus of the ASH1 transcript, coding for a specific repressor of transcription. Overexpression inhibits translation of the ASH1 transcript. Involved in the stability of transcripts, like the MTL1 mRNA. Involved in structural and functional organization of telomeric chromatin and regulates silencing at the HMR locus. The protein is Heterogeneous nuclear rnp K-like protein 2 (HEK2) of Saccharomyces cerevisiae (strain YJM789) (Baker's yeast).